The sequence spans 372 residues: MAWTKYQLFLAGLMLVTGSINTLSAKWADNFVAEGCGGSQEHSFKHPFVQAVGMFLGEFSCLAAFYLLKCQGRRQSASSVEPQQPFNTLLFLPPALCDMTGTSIMYVALNMTSASSFQMLRGAVIIFTGLFSVAFLDRRLAPSQWLGILITIAGLVVVGLADLLSKHDSQHKLSEVITGDLLIIMAQIIIAIQMVLEEKFVYKHNIHPLQAVGIEGFFGFVILSLLLVPMFYIPTASFSGNPRGVLEDALDAFCQVGRQPLIALALLGNISSIAFFNFSGISVTKELSATTRMVLDTLRTIVIWAFTLALGWEIFYPLQILGFLILLMGTALYNGLHRPLLAFLSRRWRLPTQEGEQERLLGDSRTPINEAS.

A signal peptide spans 1–18; the sequence is MAWTKYQLFLAGLMLVTG. The next 2 membrane-spanning stretches (helical) occupy residues 48–68 and 89–109; these read FVQA…FYLL and LLFL…YVAL. In terms of domain architecture, EamA spans 105-160; the sequence is MYVALNMTSASSFQMLRGAVIIFTGLFSVAFLDRRLAPSQWLGILITIAGLVVVGL. N-linked (GlcNAc...) asparagine glycosylation occurs at N110. Helical transmembrane passes span 116 to 136, 145 to 165, 176 to 196, 211 to 231, 261 to 281, 293 to 312, and 320 to 336; these read SFQM…VAFL, WLGI…DLLS, VITG…QMVL, AVGI…VPMF, LIAL…FSGI, MVLD…ALGW, and ILGF…YNGL. T366 is subject to Phosphothreonine.

It belongs to the SLC35F solute transporter family. Interacts with SLC25A5.

Its subcellular location is the mitochondrion. It localises to the lysosome membrane. In terms of biological role, involved in the maintenance of mitochondrial membrane potential in pancreatic ductal adenocarcinoma (PDAC) cells. Promotes pancreatic ductal adenocarcinoma (PDAC) cell growth. May play a role as a nucleotide-sugar transporter. The sequence is that of Solute carrier family 35 member F6 (Slc35f6) from Mus musculus (Mouse).